Here is an 89-residue protein sequence, read N- to C-terminus: Cytochrome c6 (89 aa).

4 residues coordinate heme c: Cys15, Cys18, His19, and Met61.

The protein belongs to the cytochrome c family. PetJ subfamily. Monomer. In terms of processing, binds 1 heme c group covalently per subunit.

The protein localises to the plastid. Its subcellular location is the chloroplast thylakoid lumen. Functions as an electron carrier between membrane-bound cytochrome b6-f and photosystem I in oxygenic photosynthesis. The sequence is that of Cytochrome c6 (petJ) from Tetradesmus obliquus (Green alga).